The chain runs to 211 residues: Arginine exporter protein ArgO (211 aa).

Transmembrane regions (helical) follow at residues 1 to 21 (MISY…PLGP), 37 to 57 (LMIA…GIFG), 68 to 88 (LLAL…FGAL), 111 to 131 (IIAT…DTFV), 147 to 167 (WFAL…ALLA), and 179 to 199 (AQRI…FQLA).

The protein belongs to the LysE/ArgO transporter (TC 2.A.75) family.

The protein resides in the cell inner membrane. It carries out the reaction L-arginine(in) = L-arginine(out). Functionally, involved in the export of arginine. Important to control the intracellular level of arginine and the correct balance between arginine and lysine. This Salmonella choleraesuis (strain SC-B67) protein is Arginine exporter protein ArgO.